The following is a 436-amino-acid chain: Enolase 1 (436 aa).

Position 40 (serine 40) interacts with Mg(2+). A disulfide bridge connects residues cysteine 147 and cysteine 169. (2R)-2-phosphoglycerate is bound by residues glutamine 164 and glutamate 208. The active-site Proton donor is the glutamate 208. Positions 243, 296, and 322 each coordinate Mg(2+). Aspartate 322 contributes to the (2R)-2-phosphoglycerate binding site. Lysine 347 (proton acceptor) is an active-site residue. Positions 376 and 377 each coordinate (2R)-2-phosphoglycerate.

It belongs to the enolase family. Homodimer. Homotetramer. Interacts with methyltransferase METH; the interaction inhibits METH catalytic activity; 2-phosphoglycerate binding to ENO prevents the interaction with METH. Mg(2+) serves as cofactor.

The protein resides in the cytoplasm. The protein localises to the nucleus. It carries out the reaction (2R)-2-phosphoglycerate = phosphoenolpyruvate + H2O. Its pathway is carbohydrate degradation; glycolysis; pyruvate from D-glyceraldehyde 3-phosphate: step 4/5. Functionally, glycolytic enzyme that catalyzes the conversion of 2-phosphoglycerate to phosphoenolpyruvate. Inhibits tRNA methyltransferase METH catalytic activity in the absence of 2-phosphoglycerate. This Entamoeba histolytica (strain ATCC 30459 / HM-1:IMSS / ABRM) protein is Enolase 1.